The primary structure comprises 510 residues: NAD(P)H-quinone oxidoreductase subunit 2, chloroplastic (510 aa).

The next 11 membrane-spanning stretches (helical) occupy residues 24–44 (LLLFHGSFIFPECILIFGLIL), 59–79 (WFYFISSTSLVMSITALLFRW), 99–119 (IFQFLILLCSTLCIPLSVEYI), 124–144 (MAITEFLLFVLTATLGGMFLC), 149–169 (LITIFVAPECFSLCSYLLSGY), 183–203 (YLLMGGASSSILVHGFSWLYG), 295–315 (WHLLLEILAILSMILGNLIAI), 323–343 (MLAYSSIGQIGYVIIGIIVGD), 347–367 (GYASMITYMLFYISMNLGTFA), 395–415 (ALSSALCLLSLGGLPPLAGFF), and 418–438 (LHLFWCGWQAGLYFLVSIGLL).

Belongs to the complex I subunit 2 family. In terms of assembly, NDH is composed of at least 16 different subunits, 5 of which are encoded in the nucleus.

It is found in the plastid. Its subcellular location is the chloroplast thylakoid membrane. The enzyme catalyses a plastoquinone + NADH + (n+1) H(+)(in) = a plastoquinol + NAD(+) + n H(+)(out). It carries out the reaction a plastoquinone + NADPH + (n+1) H(+)(in) = a plastoquinol + NADP(+) + n H(+)(out). Its function is as follows. NDH shuttles electrons from NAD(P)H:plastoquinone, via FMN and iron-sulfur (Fe-S) centers, to quinones in the photosynthetic chain and possibly in a chloroplast respiratory chain. The immediate electron acceptor for the enzyme in this species is believed to be plastoquinone. Couples the redox reaction to proton translocation, and thus conserves the redox energy in a proton gradient. This is NAD(P)H-quinone oxidoreductase subunit 2, chloroplastic from Maianthemum racemosum (False Solomon's-seal).